The primary structure comprises 283 residues: Pantothenate synthetase (283 aa).

Position 30–37 (30–37 (MGNLHNGH)) interacts with ATP. The active-site Proton donor is H37. Residue Q61 participates in (R)-pantoate binding. Q61 provides a ligand contact to beta-alanine. 149 to 152 (GEKD) is a binding site for ATP. (R)-pantoate is bound at residue Q155. 186–189 (LSSR) lines the ATP pocket.

This sequence belongs to the pantothenate synthetase family. In terms of assembly, homodimer.

It localises to the cytoplasm. The enzyme catalyses (R)-pantoate + beta-alanine + ATP = (R)-pantothenate + AMP + diphosphate + H(+). It participates in cofactor biosynthesis; (R)-pantothenate biosynthesis; (R)-pantothenate from (R)-pantoate and beta-alanine: step 1/1. Catalyzes the condensation of pantoate with beta-alanine in an ATP-dependent reaction via a pantoyl-adenylate intermediate. The chain is Pantothenate synthetase from Shigella flexneri serotype 5b (strain 8401).